A 347-amino-acid chain; its full sequence is MRIEQELKLGFKDVLFRPKRSTLKSRSQVELTRNFTFKHSGRQWSGTPVIAANMDSVGSFAMAKALSEHGVMTAVHKHYTVADWAEFIKENDASVLKNAMVSTGTSEADFQKTKDIMALTDDLIFICIDIANGYSEHLVQYVEKVRAEFPDKVISAGNVVTGDMVEELILAGADIVKVGIGPGSVCTTRVKTGVGYPQLSAIIECADAAHGLGGRIIGDGGCSCAGDVSKAFGGGADFVMLGGMLAGHEESGGEVIEQDGKQFMKFYGMSSQSAMDKHSGGVAKYRAAEGKTVLLPFRGSVHNTISDILGGVRSTCTYVGAAQLKELTKRTTFIRVQEQENNVFGKE.

108 to 131 (ADFQKTKDIMALTDDLIFICIDIA) is a binding site for NADP(+). The K(+) site is built by glycine 181 and glycine 183. Residue cysteine 186 is the Thioimidate intermediate of the active site. An NADP(+)-binding site is contributed by 216–239 (IIGDGGCSCAGDVSKAFGGGADFV).

This sequence belongs to the IMPDH/GMPR family. GuaC type 1 subfamily. Homotetramer.

The catalysed reaction is IMP + NH4(+) + NADP(+) = GMP + NADPH + 2 H(+). Catalyzes the irreversible NADPH-dependent deamination of GMP to IMP. It functions in the conversion of nucleobase, nucleoside and nucleotide derivatives of G to A nucleotides, and in maintaining the intracellular balance of A and G nucleotides. This chain is GMP reductase, found in Aliivibrio fischeri (strain MJ11) (Vibrio fischeri).